Reading from the N-terminus, the 804-residue chain is Cas scaffolding protein family member 4 (804 aa).

An SH3 domain is found at 11–73; it reads PKTLLARALY…PANRLQVLRE (63 aa). Ser200 and Ser297 each carry phosphoserine. 3 disordered regions span residues 369–395, 607–628, and 642–686; these read LERG…DSDR, QRET…TEHS, and QQSP…TERK. The span at 380 to 390 shows a compositional bias: polar residues; the sequence is PWISGQTSFLS. Residues 649-664 show a composition bias toward basic and acidic residues; it reads EKGKPTMEGKSNRNPD.

Belongs to the CAS family. Interacts (via SH3 domain) with PTK2/FAK1 (via C-terminus). Post-translationally, phosphorylated on tyrosines by SRC.

It is found in the cytoplasm. The protein resides in the cytoskeleton. The protein localises to the cell junction. It localises to the focal adhesion. Functionally, docking protein that plays a role in tyrosine kinase-based signaling related to cell adhesion and cell spreading. Regulates PTK2/FAK1 activity, focal adhesion integrity, and cell spreading. The sequence is that of Cas scaffolding protein family member 4 from Mus musculus (Mouse).